The primary structure comprises 136 residues: uncharacterized protein (136 aa).

An N-terminal signal peptide occupies residues 1-35 (MTHRAVPCQPRAFSKIKVLVISFLFLMVAFLPFSS).

This is an uncharacterized protein from Saccharomyces cerevisiae (strain ATCC 204508 / S288c) (Baker's yeast).